The chain runs to 1015 residues: Probable beta-galactosidase B (1015 aa).

The signal sequence occupies residues 1–21 (MAHIYRLLLLLLSNLWFSAAA). An N-linked (GlcNAc...) asparagine glycan is attached at Asn-23. Position 90 (Tyr-90) interacts with substrate. An N-linked (GlcNAc...) asparagine glycan is attached at Asn-100. Asn-135, Ala-136, and Glu-137 together coordinate substrate. N-linked (GlcNAc...) asparagine glycosylation occurs at Asn-172. Asn-195 provides a ligand contact to substrate. Glu-196 serves as the catalytic Proton donor. N-linked (GlcNAc...) asparagine glycosylation occurs at Asn-211. Tyr-265 lines the substrate pocket. A disulfide bond links Cys-271 and Cys-324. Glu-308 acts as the Nucleophile in catalysis. Tyr-373 is a substrate binding site. Asn-411, Asn-441, Asn-456, Asn-554, Asn-679, Asn-735, Asn-775, Asn-821, and Asn-878 each carry an N-linked (GlcNAc...) asparagine glycan.

The protein belongs to the glycosyl hydrolase 35 family.

It is found in the secreted. The catalysed reaction is Hydrolysis of terminal non-reducing beta-D-galactose residues in beta-D-galactosides.. Cleaves beta-linked terminal galactosyl residues from gangliosides, glycoproteins, and glycosaminoglycans. This Neosartorya fischeri (strain ATCC 1020 / DSM 3700 / CBS 544.65 / FGSC A1164 / JCM 1740 / NRRL 181 / WB 181) (Aspergillus fischerianus) protein is Probable beta-galactosidase B (lacB).